The following is a 330-amino-acid chain: MALPVYYDKDIDLGVIQSLQVGIIGYGAQGEAQALNLRDSKVKARIGLYQGSLSVSKAKKEGFEVLEVKELVQNSDVIMALLPDELHKEVLEKEVIPFLKEGQIVGFAHGFSVHFNQVVLPKGVGAILVAPKGPGSALREEYLKNRGLYHLIAIEQESSIHNAKAVALSYAKAMGGGRMGVLETSFKEECESDLFGEQAVLCGGLEAIVRMGFETLIKAGYPEELAYFECVHEVKLVADLLHYKGVEGLRKHISNTAEFGAIKAREPMGKLLKKRMQKILKKIQNGSFAKDFLLEKSLNYPRLNTERKALKETKIEQIGEILRAPFNHKK.

Residues 3–184 (LPVYYDKDID…GGGRMGVLET (182 aa)) form the KARI N-terminal Rossmann domain. NADP(+)-binding positions include 26 to 29 (YGAQ), serine 52, and serine 54. Residue histidine 109 is part of the active site. Glycine 135 is an NADP(+) binding site. The KARI C-terminal knotted domain maps to 185–329 (SFKEECESDL…EILRAPFNHK (145 aa)). Mg(2+) is bound by residues aspartate 193, glutamate 197, glutamate 229, and glutamate 233. Serine 254 contributes to the substrate binding site.

Belongs to the ketol-acid reductoisomerase family. It depends on Mg(2+) as a cofactor.

It carries out the reaction (2R)-2,3-dihydroxy-3-methylbutanoate + NADP(+) = (2S)-2-acetolactate + NADPH + H(+). The catalysed reaction is (2R,3R)-2,3-dihydroxy-3-methylpentanoate + NADP(+) = (S)-2-ethyl-2-hydroxy-3-oxobutanoate + NADPH + H(+). Its pathway is amino-acid biosynthesis; L-isoleucine biosynthesis; L-isoleucine from 2-oxobutanoate: step 2/4. It functions in the pathway amino-acid biosynthesis; L-valine biosynthesis; L-valine from pyruvate: step 2/4. Involved in the biosynthesis of branched-chain amino acids (BCAA). Catalyzes an alkyl-migration followed by a ketol-acid reduction of (S)-2-acetolactate (S2AL) to yield (R)-2,3-dihydroxy-isovalerate. In the isomerase reaction, S2AL is rearranged via a Mg-dependent methyl migration to produce 3-hydroxy-3-methyl-2-ketobutyrate (HMKB). In the reductase reaction, this 2-ketoacid undergoes a metal-dependent reduction by NADPH to yield (R)-2,3-dihydroxy-isovalerate. This chain is Ketol-acid reductoisomerase (NADP(+)), found in Helicobacter pylori (strain ATCC 700392 / 26695) (Campylobacter pylori).